Consider the following 523-residue polypeptide: Cyclin-dependent kinase 17 (523 aa).

A Phosphoserine modification is found at S9. Residues 31–55 form a disordered region; that stretch reads IEESSSKDNEPIVKNGRPPTSHSMH. 3 positions are modified to phosphoserine: S80, S92, and S105. The segment at 103–123 is disordered; the sequence is MGSDGESDQASGTSSDEVQSP. Residues 110–123 show a composition bias toward polar residues; that stretch reads DQASGTSSDEVQSP. A phosphoserine mark is found at S137, S146, S165, and S180. The Protein kinase domain maps to 192-473; the sequence is YIKLEKLGEG…AEEAMKHVYF (282 aa). ATP-binding positions include 198–206 and K221; that span reads LGEGTYATV. Residue D313 is the Proton acceptor of the active site.

This sequence belongs to the protein kinase superfamily. CMGC Ser/Thr protein kinase family. CDC2/CDKX subfamily. Found in a complex containing CABLES1, CDK16 and TDRD7. Interacts with TDRD7. As to expression, brain specific. Within the brain it is concentrated in the neuronal layers of the hippocampus and olfactory bulb, which mostly consist of post-mitotic neurons.

The enzyme catalyses L-seryl-[protein] + ATP = O-phospho-L-seryl-[protein] + ADP + H(+). It carries out the reaction L-threonyl-[protein] + ATP = O-phospho-L-threonyl-[protein] + ADP + H(+). In terms of biological role, may play a role in terminally differentiated neurons. Has a Ser/Thr-phosphorylating activity for histone H1. This is Cyclin-dependent kinase 17 (Cdk17) from Rattus norvegicus (Rat).